A 202-amino-acid polypeptide reads, in one-letter code: Imidazoleglycerol-phosphate dehydratase (202 aa).

This sequence belongs to the imidazoleglycerol-phosphate dehydratase family.

Its subcellular location is the cytoplasm. The enzyme catalyses D-erythro-1-(imidazol-4-yl)glycerol 3-phosphate = 3-(imidazol-4-yl)-2-oxopropyl phosphate + H2O. It participates in amino-acid biosynthesis; L-histidine biosynthesis; L-histidine from 5-phospho-alpha-D-ribose 1-diphosphate: step 6/9. The protein is Imidazoleglycerol-phosphate dehydratase of Chelativorans sp. (strain BNC1).